The following is a 233-amino-acid chain: 7-cyano-7-deazaguanine synthase (233 aa).

Residue 18–28 (FSGGQDSTTCL) participates in ATP binding. Residues C198, C213, C216, and C219 each contribute to the Zn(2+) site.

This sequence belongs to the QueC family. Zn(2+) is required as a cofactor.

The catalysed reaction is 7-carboxy-7-deazaguanine + NH4(+) + ATP = 7-cyano-7-deazaguanine + ADP + phosphate + H2O + H(+). It functions in the pathway purine metabolism; 7-cyano-7-deazaguanine biosynthesis. Functionally, catalyzes the ATP-dependent conversion of 7-carboxy-7-deazaguanine (CDG) to 7-cyano-7-deazaguanine (preQ(0)). In Wolinella succinogenes (strain ATCC 29543 / DSM 1740 / CCUG 13145 / JCM 31913 / LMG 7466 / NCTC 11488 / FDC 602W) (Vibrio succinogenes), this protein is 7-cyano-7-deazaguanine synthase.